Consider the following 106-residue polypeptide: Large ribosomal subunit protein uL24 (106 aa).

This sequence belongs to the universal ribosomal protein uL24 family. As to quaternary structure, part of the 50S ribosomal subunit.

In terms of biological role, one of two assembly initiator proteins, it binds directly to the 5'-end of the 23S rRNA, where it nucleates assembly of the 50S subunit. One of the proteins that surrounds the polypeptide exit tunnel on the outside of the subunit. This is Large ribosomal subunit protein uL24 from Paramagnetospirillum magneticum (strain ATCC 700264 / AMB-1) (Magnetospirillum magneticum).